The primary structure comprises 384 residues: Histidinol-phosphate aminotransferase 1 (384 aa).

The residue at position 233 (Lys-233) is an N6-(pyridoxal phosphate)lysine.

Belongs to the class-II pyridoxal-phosphate-dependent aminotransferase family. Histidinol-phosphate aminotransferase subfamily. In terms of assembly, homodimer. Requires pyridoxal 5'-phosphate as cofactor.

It catalyses the reaction L-histidinol phosphate + 2-oxoglutarate = 3-(imidazol-4-yl)-2-oxopropyl phosphate + L-glutamate. The protein operates within amino-acid biosynthesis; L-histidine biosynthesis; L-histidine from 5-phospho-alpha-D-ribose 1-diphosphate: step 7/9. The polypeptide is Histidinol-phosphate aminotransferase 1 (Thiobacillus denitrificans (strain ATCC 25259 / T1)).